Reading from the N-terminus, the 233-residue chain is Small ribosomal subunit protein uS3 (233 aa).

In terms of domain architecture, KH type-2 spans 39-107 (VRTFLTKELK…PAQINISEVR (69 aa)).

It belongs to the universal ribosomal protein uS3 family. In terms of assembly, part of the 30S ribosomal subunit. Forms a tight complex with proteins S10 and S14.

Its function is as follows. Binds the lower part of the 30S subunit head. Binds mRNA in the 70S ribosome, positioning it for translation. This Pseudoalteromonas translucida (strain TAC 125) protein is Small ribosomal subunit protein uS3.